The chain runs to 151 residues: UPF0178 protein Caul_3070 (151 aa).

Belongs to the UPF0178 family.

In Caulobacter sp. (strain K31), this protein is UPF0178 protein Caul_3070.